The sequence spans 279 residues: MAIRKYKPTTPGLRGSSVADFAEITRSTPEKSLLRPLHKTGGRNNTGRITTRHKGGGHKRQYRLVDFRRHDKDGVPATVAHIEYDPNRTARIALLHYADGAKRYILAPAKLKQGDVVEAGPNADIKPGNNLPMRNIPVGTTIHAVELRPGGGAKMARSAGASVQLVAREGKYAQLRLPSGEIRNVDVRCRATIGEVGNAEQSNINWGKAGRMRWKGVRPTVRGVVMNPVDHPHGGGEGKTSGGRHPVNRNGKPEGRTRRPNKESDKLIVRRRRTGKNKR.

Disordered regions lie at residues 34–58 (LRPLHKTGGRNNTGRITTRHKGGGH) and 225–279 (VMNP…KNKR). Residues 251-268 (GKPEGRTRRPNKESDKLI) show a composition bias toward basic and acidic residues. A compositionally biased stretch (basic residues) spans 269-279 (VRRRRTGKNKR).

It belongs to the universal ribosomal protein uL2 family. As to quaternary structure, part of the 50S ribosomal subunit. Forms a bridge to the 30S subunit in the 70S ribosome.

One of the primary rRNA binding proteins. Required for association of the 30S and 50S subunits to form the 70S ribosome, for tRNA binding and peptide bond formation. It has been suggested to have peptidyltransferase activity; this is somewhat controversial. Makes several contacts with the 16S rRNA in the 70S ribosome. The chain is Large ribosomal subunit protein uL2 from Micrococcus luteus (strain ATCC 4698 / DSM 20030 / JCM 1464 / CCM 169 / CCUG 5858 / IAM 1056 / NBRC 3333 / NCIMB 9278 / NCTC 2665 / VKM Ac-2230) (Micrococcus lysodeikticus).